Here is a 397-residue protein sequence, read N- to C-terminus: Methylthioribose kinase (397 aa).

ATP is bound by residues asparagine 43, lysine 60, and 114–116 (EDL). A substrate-binding site is contributed by aspartate 232. 249–251 (DPE) contacts ATP. Substrate is bound at residue arginine 340.

Belongs to the methylthioribose kinase family. As to quaternary structure, homodimer.

The enzyme catalyses 5-(methylsulfanyl)-D-ribose + ATP = 5-(methylsulfanyl)-alpha-D-ribose 1-phosphate + ADP + H(+). Its pathway is amino-acid biosynthesis; L-methionine biosynthesis via salvage pathway; S-methyl-5-thio-alpha-D-ribose 1-phosphate from S-methyl-5'-thioadenosine (hydrolase route): step 2/2. Functionally, catalyzes the phosphorylation of methylthioribose into methylthioribose-1-phosphate. In Bacillus pumilus (strain SAFR-032), this protein is Methylthioribose kinase.